The sequence spans 955 residues: MIMNQEYIKVRGAKEHNLKNINVNIPRNKFVVITGLSGSGKSSLAFDTIYAEGQRRYVESLSSYARQFLHLQNKPNVESISGLSPAIAIDQKTTSKNPRSTVGTITEIYDYLRLLYARVGIPYSPATGLPIHSQTVSEMVDIINELPKGTKIYLLAPIVRGHKGEFKREIMDLKKQGFQKLIVNGEVCEIDDLPKLDKNKKHNIEVIVDRIVLDESLGNRLADSLESSLNLAEGITYLEIVELPPAVKSEFEKNQRITFSEQYSCPVSGFQLTEIEPRIFSFNSPFGACPKCEGIGKEFFFDRDLIVPDQRIAIKDGAIVPWGSTASKFILETLKALADHYKFSIEVPFVSLSQNVKDILFEGSGEEAIKFEFHDGSKTQIIKQPFAGIIPSLQEKDRTIESVLIKEELAKFKSEHKCTACSGFRLKDEALCVKIANLHIGEVAGMSIAALQKWFSHLEEKLNKKQLFIAERILKEITERLKFLMNVGLDYLTLSREAGTLSGGESQRIRLASQIGSGLSGVLYVLDEPSIGLHQRDNTRLIETLKRLRDLGNTVLVVEHDEETIYEADHIIDIGPGAGIHGGRVIAEGNVEEIKNFEESITGRYLSGRQTIKVPSETRVGHDNRAIELLGAVSNNLDNVDIKIPLGTFTAITGVSGSGKSSLMIHTLYKAALKHLEPTSKVFPGKYRELKGLEYIDKIIDINQSPIGRTPRSNPATYTGAFTHIRDWFVELPESKARGYKVGRFSFNVKGGRCEACQGDGLIKIEMHFLPDVYVKCDICNGHRYNRETLEIKYKGKSIADILMMTVEDAMQFFEKIPLIYEKLITLNEVGLGYIKIGQSATTLSGGEAQRVKLAKELSRRSTGKTLYILDEPTTGLHIDDINKLLKVLHKLVDMGNTVLVIEHNLDVIKTADYIIDVGPEGGDKGGKIVVCGTPADIAACEESHTGRYLKQYLV.

An ATP-binding site is contributed by 35–42; it reads GLSGSGKS. 2 ABC transporter domains span residues 322–601 and 621–951; these read WGST…EESI and GHDN…RYLK. Residue 654–661 coordinates ATP; it reads GVSGSGKS. The C4-type zinc finger occupies 754-780; the sequence is CEACQGDGLIKIEMHFLPDVYVKCDIC.

The protein belongs to the ABC transporter superfamily. UvrA family. Forms a heterotetramer with UvrB during the search for lesions.

It localises to the cytoplasm. Its function is as follows. The UvrABC repair system catalyzes the recognition and processing of DNA lesions. UvrA is an ATPase and a DNA-binding protein. A damage recognition complex composed of 2 UvrA and 2 UvrB subunits scans DNA for abnormalities. When the presence of a lesion has been verified by UvrB, the UvrA molecules dissociate. This is UvrABC system protein A from Rickettsia conorii (strain ATCC VR-613 / Malish 7).